Consider the following 374-residue polypeptide: Pectate lyase 2 (374 aa).

The first 22 residues, 1–22 (MKYLLPTAAAGLLLLAAQPAMA), serve as a signal peptide directing secretion. The cysteines at positions 93 and 176 are disulfide-linked. Residues Asp150, Asp152, Glu187, and Asp191 each coordinate Ca(2+). The active site involves Arg239. A disulfide bridge links Cys350 with Cys373.

Belongs to the polysaccharide lyase 1 family. PLADES subfamily. Ca(2+) serves as cofactor.

The protein localises to the secreted. It carries out the reaction Eliminative cleavage of (1-&gt;4)-alpha-D-galacturonan to give oligosaccharides with 4-deoxy-alpha-D-galact-4-enuronosyl groups at their non-reducing ends.. Its pathway is glycan metabolism; pectin degradation; 2-dehydro-3-deoxy-D-gluconate from pectin: step 2/5. Functionally, involved in maceration and soft-rotting of plant tissue. In Pectobacterium carotovorum (Erwinia carotovora), this protein is Pectate lyase 2 (pel2).